A 101-amino-acid chain; its full sequence is MAKKAMIEREKKRQKLVAKYAAKRAALKEIANDDSKPMEERFKARLKLAELPRNSSATRLHNRCQLTGRPHAYYRKLKISRIALRDLGSAGQIPGLVKSSW.

Belongs to the universal ribosomal protein uS14 family. In terms of assembly, part of the 30S ribosomal subunit. Contacts proteins S3 and S10.

In terms of biological role, binds 16S rRNA, required for the assembly of 30S particles and may also be responsible for determining the conformation of the 16S rRNA at the A site. The chain is Small ribosomal subunit protein uS14 from Dinoroseobacter shibae (strain DSM 16493 / NCIMB 14021 / DFL 12).